Consider the following 184-residue polypeptide: Secreted protein B (184 aa).

The N-terminal stretch at 1-19 is a signal peptide; the sequence is MRFILVLVLILGLVSSSFG. Residue Asn-129 is glycosylated (N-linked (GlcNAc...) asparagine). The Cell attachment site motif lies at 164 to 166; it reads RGD.

This sequence belongs to the Sct family.

The protein resides in the secreted. The chain is Secreted protein B (29C) from Dictyostelium discoideum (Social amoeba).